The primary structure comprises 111 residues: uncharacterized protein (111 aa).

Its subcellular location is the cytoplasm. It localises to the nucleus. This is an uncharacterized protein from Saccharomyces cerevisiae (strain ATCC 204508 / S288c) (Baker's yeast).